The primary structure comprises 350 residues: Biotin synthase (350 aa).

The Radical SAM core domain maps to Gly63–Lys281. Residues Cys78, Cys82, and Cys85 each contribute to the [4Fe-4S] cluster site. Residues Cys122, Cys153, Cys213, and Arg285 each contribute to the [2Fe-2S] cluster site.

The protein belongs to the radical SAM superfamily. Biotin synthase family. Homodimer. [4Fe-4S] cluster is required as a cofactor. [2Fe-2S] cluster serves as cofactor.

It carries out the reaction (4R,5S)-dethiobiotin + (sulfur carrier)-SH + 2 reduced [2Fe-2S]-[ferredoxin] + 2 S-adenosyl-L-methionine = (sulfur carrier)-H + biotin + 2 5'-deoxyadenosine + 2 L-methionine + 2 oxidized [2Fe-2S]-[ferredoxin]. It functions in the pathway cofactor biosynthesis; biotin biosynthesis; biotin from 7,8-diaminononanoate: step 2/2. In terms of biological role, catalyzes the conversion of dethiobiotin (DTB) to biotin by the insertion of a sulfur atom into dethiobiotin via a radical-based mechanism. In Acidovorax sp. (strain JS42), this protein is Biotin synthase.